The sequence spans 749 residues: MSTTIIGFPRLGEFRELKFTTEKYFRNEITADELLAAAKDLRAKHWNIVKEKGITEIPSNDFSHYDNFLDAAFLFNVVPESVKNLDLTELEQYFALARGYQGEKGDVRALPMKKWFNTNYHYIVPKFEKTTAVKLAGHKIFDEYQEAKDLGLDTRPVVVGPFTFLQLSDFEDGVKAEDFVDSFIAAYQDVFAKLAELGATRIQLDEPALVKDLTADEKALFLNLYNKILADKKGLEVLIQTYFGDVRDVYNDLVNLPVDAIGLDFVEGKKTLELVKGGFPADKTLYAGIVNGKNIWRNNYEKSLAVLEQIPAEKIVLTSSCSLLHVPFTTANEEFEPAILNHFAFAVEKLDELRDLDAIRNGQGAESLAANKELFAIERVGANAELRARIAGLTEADYTRLPAFAEREAIQKDAFKLPLLPTTTIGSFPQTKEVRAKRLAFRKNELSQEEYDAFLAEIIDEWIKWQEEVGFDVLVHGEFERNDMVEYFGQNLSGYLFSKNGWVQSYGMRGVKPPIIWGDVTRLNPITVKWSSYAQSRTDKPVKGMLTGPVTILNWSFPREDISIKDSTLQIALAIKDEVLDLEAAGIKIIQIDEAALREKLPLRRSDWYEDYLDWAIPAFRLVHSTVAPDTQIHTHMCYSEFTDIIPAIDNLDADVISFEASRSNLEILDELKAQNFQTEVGPGVYDIHSPRVPQDGEIDHTIEAILAKVPSSKVWINPDCGLKTRGIKETKESLTKLLEAAKAARKNL.

5-methyltetrahydropteroyltri-L-glutamate contacts are provided by residues 15-18 (RELK) and lysine 114. L-homocysteine-binding positions include 425 to 427 (IGS) and glutamate 478. L-methionine is bound by residues 425 to 427 (IGS) and glutamate 478. A 5-methyltetrahydropteroyltri-L-glutamate-binding site is contributed by tryptophan 555. Aspartate 593 is a binding site for L-homocysteine. Position 593 (aspartate 593) interacts with L-methionine. Glutamate 599 lines the 5-methyltetrahydropteroyltri-L-glutamate pocket. Histidine 636, cysteine 638, and glutamate 660 together coordinate Zn(2+). Histidine 689 serves as the catalytic Proton donor. Residue cysteine 721 coordinates Zn(2+).

It belongs to the vitamin-B12 independent methionine synthase family. The cofactor is Zn(2+).

The catalysed reaction is 5-methyltetrahydropteroyltri-L-glutamate + L-homocysteine = tetrahydropteroyltri-L-glutamate + L-methionine. It functions in the pathway amino-acid biosynthesis; L-methionine biosynthesis via de novo pathway; L-methionine from L-homocysteine (MetE route): step 1/1. Functionally, catalyzes the transfer of a methyl group from 5-methyltetrahydrofolate to homocysteine resulting in methionine formation. This Streptococcus thermophilus (strain ATCC BAA-491 / LMD-9) protein is 5-methyltetrahydropteroyltriglutamate--homocysteine methyltransferase.